Here is a 183-residue protein sequence, read N- to C-terminus: Outer membrane protein H.8 (183 aa).

Residues 1–17 form the signal peptide; sequence MKAYLALISAAVIGLAA. Residue cysteine 18 is the site of N-palmitoyl cysteine attachment. Cysteine 18 is lipidated: S-diacylglycerol cysteine. The interval 27-51 is disordered; the sequence is AEATPAAEAPASEAPAAEAAPADAA. Positions 57 to 183 constitute a Plastocyanin-like domain; that stretch reads GNCAATVESN…LMNGKVTLVD (127 aa). Cu cation is bound by residues histidine 102, cysteine 166, histidine 171, and methionine 175.

Cu cation is required as a cofactor.

The protein resides in the cell outer membrane. The chain is Outer membrane protein H.8 from Neisseria meningitidis serogroup C / serotype 2a (strain ATCC 700532 / DSM 15464 / FAM18).